Reading from the N-terminus, the 85-residue chain is UPF0297 protein lhv_0439 (85 aa).

This sequence belongs to the UPF0297 family.

The polypeptide is UPF0297 protein lhv_0439 (Lactobacillus helveticus (strain DPC 4571)).